The chain runs to 344 residues: uncharacterized protein (344 aa).

The region spanning 242-343 is the HTH araC/xylS-type domain; it reads RGITALVRSK…GVAPSEYSRR (102 aa). DNA-binding regions (H-T-H motif) lie at residues 263–284 and 310–333; these read TDVA…AEEG and VQQV…KRWY.

This is an uncharacterized protein from Mycobacterium bovis (strain ATCC BAA-935 / AF2122/97).